The chain runs to 457 residues: Na(+)/H(+) antiporter NhaA (457 aa).

Transmembrane regions (helical) follow at residues 33-53, 76-96, 114-134, 142-162, 172-192, 196-216, 235-255, 308-328, 349-369, 385-405, and 419-439; these read ASGI…NSPL, FSLA…VVGM, LLPL…FLAF, AGWG…LTLL, VFVT…IALF, GLQL…ALMS, YALH…GLAI, FVHA…ALAN, TALA…WIAV, LIGV…IAGL, and VGIL…LRLT.

This sequence belongs to the NhaA Na(+)/H(+) (TC 2.A.33) antiporter family.

It is found in the cell inner membrane. It catalyses the reaction Na(+)(in) + 2 H(+)(out) = Na(+)(out) + 2 H(+)(in). In terms of biological role, na(+)/H(+) antiporter that extrudes sodium in exchange for external protons. The polypeptide is Na(+)/H(+) antiporter NhaA (Anaeromyxobacter sp. (strain Fw109-5)).